Reading from the N-terminus, the 431-residue chain is D-inositol 3-phosphate glycosyltransferase (431 aa).

H14 is a 1D-myo-inositol 3-phosphate binding site. UDP-N-acetyl-alpha-D-glucosamine is bound by residues 20-21 (QP) and G28. 1D-myo-inositol 3-phosphate is bound by residues 25-30 (DAGGMN), K83, Y116, T140, and R160. R240 and K245 together coordinate UDP-N-acetyl-alpha-D-glucosamine. Positions 315, 316, and 318 each coordinate Mg(2+). Positions 328 and 336 each coordinate UDP-N-acetyl-alpha-D-glucosamine. T342 is a binding site for Mg(2+).

It belongs to the glycosyltransferase group 1 family. MshA subfamily. Homodimer.

It catalyses the reaction 1D-myo-inositol 3-phosphate + UDP-N-acetyl-alpha-D-glucosamine = 1D-myo-inositol 2-acetamido-2-deoxy-alpha-D-glucopyranoside 3-phosphate + UDP + H(+). In terms of biological role, catalyzes the transfer of a N-acetyl-glucosamine moiety to 1D-myo-inositol 3-phosphate to produce 1D-myo-inositol 2-acetamido-2-deoxy-glucopyranoside 3-phosphate in the mycothiol biosynthesis pathway. The protein is D-inositol 3-phosphate glycosyltransferase of Thermomonospora curvata (strain ATCC 19995 / DSM 43183 / JCM 3096 / KCTC 9072 / NBRC 15933 / NCIMB 10081 / Henssen B9).